The primary structure comprises 315 residues: Transaldolase (315 aa).

Catalysis depends on K131, which acts as the Schiff-base intermediate with substrate.

It belongs to the transaldolase family. Type 1 subfamily. Homodimer.

The protein resides in the cytoplasm. It catalyses the reaction D-sedoheptulose 7-phosphate + D-glyceraldehyde 3-phosphate = D-erythrose 4-phosphate + beta-D-fructose 6-phosphate. Its pathway is carbohydrate degradation; pentose phosphate pathway; D-glyceraldehyde 3-phosphate and beta-D-fructose 6-phosphate from D-ribose 5-phosphate and D-xylulose 5-phosphate (non-oxidative stage): step 2/3. Functionally, transaldolase is important for the balance of metabolites in the pentose-phosphate pathway. This Actinobacillus pleuropneumoniae serotype 3 (strain JL03) protein is Transaldolase.